The chain runs to 314 residues: DNA-directed RNA polymerase subunit alpha (314 aa).

The interval 1-228 (MIEIEKPNIE…EHLNIFVGLT (228 aa)) is alpha N-terminal domain (alpha-NTD). The tract at residues 245–314 (KEKVLEMTIE…ELGLGLRNEE (70 aa)) is alpha C-terminal domain (alpha-CTD).

The protein belongs to the RNA polymerase alpha chain family. Homodimer. The RNAP catalytic core consists of 2 alpha, 1 beta, 1 beta' and 1 omega subunit. When a sigma factor is associated with the core the holoenzyme is formed, which can initiate transcription.

The catalysed reaction is RNA(n) + a ribonucleoside 5'-triphosphate = RNA(n+1) + diphosphate. Functionally, DNA-dependent RNA polymerase catalyzes the transcription of DNA into RNA using the four ribonucleoside triphosphates as substrates. This chain is DNA-directed RNA polymerase subunit alpha, found in Shouchella clausii (strain KSM-K16) (Alkalihalobacillus clausii).